The following is a 186-amino-acid chain: uncharacterized protein (186 aa).

The N-terminal stretch at 1 to 21 (MKFFLGSALFLILTFINLVRA) is a signal peptide. Over 22–142 (EFEFITPAED…AFSVNPIDKK (121 aa)) the chain is Extracellular. Residues Asn-62, Asn-75, Asn-93, and Asn-104 are each glycosylated (N-linked (GlcNAc...) asparagine). The chain crosses the membrane as a helical span at residues 143–163 (LAIGLSVGLSCCILIVLFLHF). The Cytoplasmic segment spans residues 164 to 186 (ATRRERRILKNEKELEMSSYRKH).

It localises to the membrane. This is an uncharacterized protein from Schizosaccharomyces pombe (strain 972 / ATCC 24843) (Fission yeast).